Consider the following 460-residue polypeptide: Kynurenine 3-monooxygenase (460 aa).

It belongs to the aromatic-ring hydroxylase family. KMO subfamily. It depends on FAD as a cofactor.

It is found in the mitochondrion. The enzyme catalyses L-kynurenine + NADPH + O2 + H(+) = 3-hydroxy-L-kynurenine + NADP(+) + H2O. The protein operates within cofactor biosynthesis; NAD(+) biosynthesis; quinolinate from L-kynurenine: step 1/3. Catalyzes the hydroxylation of L-kynurenine (L-Kyn) to form 3-hydroxy-L-kynurenine (L-3OHKyn). Required for synthesis of quinolinic acid. This Dictyostelium discoideum (Social amoeba) protein is Kynurenine 3-monooxygenase.